Consider the following 979-residue polypeptide: Translation initiation factor IF-2 (979 aa).

Positions 50–77 (LKRSHGQSDDSARKKITLTKRETSEIRQ) are enriched in basic and acidic residues. The tract at residues 50–385 (LKRSHGQSDD…GKHNADDARS (336 aa)) is disordered. The span at 78–87 (SDSTGKTRTV) shows a compositional bias: polar residues. Basic and acidic residues-rich tracts occupy residues 98 to 109 (IKRDDVESHGDG), 121 to 142 (EEVRRDEEQRREQAEALARQEA), and 149 to 173 (EAAEREEAERRAKQEALEAEQRRQA). Residues 174–192 (ELLAQKAAEEAAAAQAAAD) are compositionally biased toward low complexity. 3 stretches are compositionally biased toward basic and acidic residues: residues 196–211 (ETAREKAEEDKARLAT), 219–263 (NADD…EAEA), and 280–291 (PSERKAEEKKAE). Residues 317–327 (APAATTTTAAA) are compositionally biased toward low complexity. A compositionally biased stretch (gly residues) spans 351–368 (GGGLKTRGDSSGGVGGWR). The tr-type G domain occupies 479 to 646 (PRPPVVTVMG…NVLLQAEVLE (168 aa)). Residues 488 to 495 (GHVDHGKT) are G1. 488 to 495 (GHVDHGKT) contacts GTP. A G2 region spans residues 513–517 (GITQH). The G3 stretch occupies residues 534 to 537 (DTPG). GTP-binding positions include 534 to 538 (DTPGH) and 588 to 591 (TKVD). The tract at residues 588–591 (TKVD) is G4. A G5 region spans residues 624-626 (SAK).

It belongs to the TRAFAC class translation factor GTPase superfamily. Classic translation factor GTPase family. IF-2 subfamily.

The protein localises to the cytoplasm. Functionally, one of the essential components for the initiation of protein synthesis. Protects formylmethionyl-tRNA from spontaneous hydrolysis and promotes its binding to the 30S ribosomal subunits. Also involved in the hydrolysis of GTP during the formation of the 70S ribosomal complex. The sequence is that of Translation initiation factor IF-2 from Cupriavidus metallidurans (strain ATCC 43123 / DSM 2839 / NBRC 102507 / CH34) (Ralstonia metallidurans).